The sequence spans 227 residues: Cytochrome c oxidase subunit 2 (227 aa).

The Mitochondrial intermembrane segment spans residues 1-14 (MAYPFQLGLQDATS). The helical transmembrane segment at 15–45 (PIMEELTNFHDHTLMIVFLISTLVLYIISLM) threads the bilayer. Topologically, residues 46-59 (LTTKLTHTSTMDAQ) are mitochondrial matrix. The helical transmembrane segment at 60–87 (EVETIWTILPAVILILIALPSLRILYMM) threads the bilayer. The Mitochondrial intermembrane portion of the chain corresponds to 88 to 227 (DEINNPVLTV…YFENWSASMI (140 aa)). Cu cation-binding residues include His161, Cys196, Glu198, Cys200, His204, and Met207. Glu198 serves as a coordination point for Mg(2+). Tyr218 is subject to Phosphotyrosine.

Belongs to the cytochrome c oxidase subunit 2 family. Component of the cytochrome c oxidase (complex IV, CIV), a multisubunit enzyme composed of 14 subunits. The complex is composed of a catalytic core of 3 subunits MT-CO1, MT-CO2 and MT-CO3, encoded in the mitochondrial DNA, and 11 supernumerary subunits COX4I, COX5A, COX5B, COX6A, COX6B, COX6C, COX7A, COX7B, COX7C, COX8 and NDUFA4, which are encoded in the nuclear genome. The complex exists as a monomer or a dimer and forms supercomplexes (SCs) in the inner mitochondrial membrane with NADH-ubiquinone oxidoreductase (complex I, CI) and ubiquinol-cytochrome c oxidoreductase (cytochrome b-c1 complex, complex III, CIII), resulting in different assemblies (supercomplex SCI(1)III(2)IV(1) and megacomplex MCI(2)III(2)IV(2)). Found in a complex with TMEM177, COA6, COX18, COX20, SCO1 and SCO2. Interacts with TMEM177 in a COX20-dependent manner. Interacts with COX20. Interacts with COX16. It depends on Cu cation as a cofactor.

It is found in the mitochondrion inner membrane. The enzyme catalyses 4 Fe(II)-[cytochrome c] + O2 + 8 H(+)(in) = 4 Fe(III)-[cytochrome c] + 2 H2O + 4 H(+)(out). Component of the cytochrome c oxidase, the last enzyme in the mitochondrial electron transport chain which drives oxidative phosphorylation. The respiratory chain contains 3 multisubunit complexes succinate dehydrogenase (complex II, CII), ubiquinol-cytochrome c oxidoreductase (cytochrome b-c1 complex, complex III, CIII) and cytochrome c oxidase (complex IV, CIV), that cooperate to transfer electrons derived from NADH and succinate to molecular oxygen, creating an electrochemical gradient over the inner membrane that drives transmembrane transport and the ATP synthase. Cytochrome c oxidase is the component of the respiratory chain that catalyzes the reduction of oxygen to water. Electrons originating from reduced cytochrome c in the intermembrane space (IMS) are transferred via the dinuclear copper A center (CU(A)) of subunit 2 and heme A of subunit 1 to the active site in subunit 1, a binuclear center (BNC) formed by heme A3 and copper B (CU(B)). The BNC reduces molecular oxygen to 2 water molecules using 4 electrons from cytochrome c in the IMS and 4 protons from the mitochondrial matrix. The sequence is that of Cytochrome c oxidase subunit 2 (MT-CO2) from Leopoldamys sabanus (Long-tailed giant rat).